The sequence spans 112 residues: uncharacterized protein (112 aa).

The segment at 70-112 (GLYRGRRPPGRDAARPTTAILFAQGRPPLLDQRAPTRRGSHQR) is disordered.

This is an uncharacterized protein from Homo sapiens (Human).